A 313-amino-acid polypeptide reads, in one-letter code: Olfactory receptor 4M2 (313 aa).

Over 1 to 25 (METANYTKVTEFVLTGLSQTPEVQL) the chain is Extracellular. Asn5 carries N-linked (GlcNAc...) asparagine glycosylation. The chain crosses the membrane as a helical span at residues 26-49 (VLFVIFLSFYLFILPGNILIICTI). Topologically, residues 50–57 (SLDPHLTS) are cytoplasmic. A helical transmembrane segment spans residues 58–79 (PMYFLLANLAFLDIWYSSITAP). The Extracellular portion of the chain corresponds to 80–100 (EMLIDFFVERKIISFDGCIAQ). Cys97 and Cys189 form a disulfide bridge. Residues 101–120 (LFFLHFAGASEMFLLTVMAF) form a helical membrane-spanning segment. Residues 121 to 139 (DLYTAICRPLHYATIMNQR) are Cytoplasmic-facing. The helical transmembrane segment at 140–158 (LCCILVALSWRGGFIHSII) threads the bilayer. Residues 159-195 (QVALIVRLPFCGPNELDSYFCDITQVVRIACANTFPE) lie on the Extracellular side of the membrane. Residues 196–219 (ELVMICSSGLISVVCLIALLMSYA) traverse the membrane as a helical segment. At 220-237 (FLLALFKKLSGSGENTNR) the chain is on the cytoplasmic side. A helical transmembrane segment spans residues 238–260 (AMSTCYSHITIVVLMFGPSIYIY). Topologically, residues 261-271 (ARPFDSFSLDK) are extracellular. Residues 272-291 (VVSVFNTLIFPLRNPIIYTL) form a helical membrane-spanning segment. Residues 292 to 313 (RNKEVKAAMRKLVTKYILCKEK) lie on the Cytoplasmic side of the membrane.

This sequence belongs to the G-protein coupled receptor 1 family.

The protein resides in the cell membrane. In terms of biological role, odorant receptor. This is Olfactory receptor 4M2 (OR4M2) from Homo sapiens (Human).